Here is a 98-residue protein sequence, read N- to C-terminus: NADH-ubiquinone oxidoreductase chain 4L (98 aa).

The next 3 helical transmembrane spans lie at 1 to 21 (MSMVYINIFLAFILSLMGMLV), 29 to 49 (SLLCLEGMMLSLFVMMSVTIL), and 61 to 81 (IVLLVFAACEAALGLSLLVMV).

The protein belongs to the complex I subunit 4L family. In terms of assembly, core subunit of respiratory chain NADH dehydrogenase (Complex I) which is composed of 45 different subunits.

Its subcellular location is the mitochondrion inner membrane. It catalyses the reaction a ubiquinone + NADH + 5 H(+)(in) = a ubiquinol + NAD(+) + 4 H(+)(out). Functionally, core subunit of the mitochondrial membrane respiratory chain NADH dehydrogenase (Complex I) which catalyzes electron transfer from NADH through the respiratory chain, using ubiquinone as an electron acceptor. Part of the enzyme membrane arm which is embedded in the lipid bilayer and involved in proton translocation. The polypeptide is NADH-ubiquinone oxidoreductase chain 4L (MT-ND4L) (Vulpes vulpes (Red fox)).